A 166-amino-acid polypeptide reads, in one-letter code: Large ribosomal subunit protein bL9 (166 aa).

The protein belongs to the bacterial ribosomal protein bL9 family.

In terms of biological role, binds to the 23S rRNA. In Brachyspira hyodysenteriae (strain ATCC 49526 / WA1), this protein is Large ribosomal subunit protein bL9.